Consider the following 196-residue polypeptide: uncharacterized protein (196 aa).

This is an uncharacterized protein from Mycoplasma pneumoniae (strain ATCC 29342 / M129 / Subtype 1) (Mycoplasmoides pneumoniae).